Here is a 189-residue protein sequence, read N- to C-terminus: UPF0232 protein MLBr00004 (189 aa).

A disordered region spans residues 59–78 (TDRRRNWSGPGPDVRDPQPL).

Belongs to the UPF0232 family.

This Mycobacterium leprae (strain Br4923) protein is UPF0232 protein MLBr00004.